Consider the following 496-residue polypeptide: Glycerol kinase (496 aa).

Thr12 serves as a coordination point for ADP. Positions 12, 13, and 14 each coordinate ATP. Thr12 is a binding site for sn-glycerol 3-phosphate. Arg16 provides a ligand contact to ADP. Residues Arg82, Glu83, and Tyr134 each contribute to the sn-glycerol 3-phosphate site. Glycerol contacts are provided by Arg82, Glu83, and Tyr134. His230 is subject to Phosphohistidine; by HPr. Residue Asp244 participates in sn-glycerol 3-phosphate binding. Asp244 and Gln245 together coordinate glycerol. The ADP site is built by Thr266 and Gly309. ATP contacts are provided by Thr266, Gly309, Gln313, and Gly410. 2 residues coordinate ADP: Gly410 and Asn414.

Belongs to the FGGY kinase family. As to quaternary structure, homotetramer and homodimer (in equilibrium). Post-translationally, the phosphoenolpyruvate-dependent sugar phosphotransferase system (PTS), including enzyme I, and histidine-containing protein (HPr) are required for the phosphorylation, which leads to the activation of the enzyme.

It carries out the reaction glycerol + ATP = sn-glycerol 3-phosphate + ADP + H(+). It functions in the pathway polyol metabolism; glycerol degradation via glycerol kinase pathway; sn-glycerol 3-phosphate from glycerol: step 1/1. Activated by phosphorylation and inhibited by fructose 1,6-bisphosphate (FBP). Key enzyme in the regulation of glycerol uptake and metabolism. Catalyzes the phosphorylation of glycerol to yield sn-glycerol 3-phosphate. The protein is Glycerol kinase of Bacillus anthracis (strain A0248).